The following is a 496-amino-acid chain: Autophagy-related protein 21 (496 aa).

The tract at residues 41–86 is disordered; the sequence is SKKKTSNNNGSASNSESRNNEESILITNGSRDRTDAEEEEDNEDNA. Residues 46–57 show a composition bias toward low complexity; the sequence is SNNNGSASNSES. Acidic residues predominate over residues 75 to 84; sequence DAEEEEDNED. Thr213 bears the Phosphothreonine mark. Ser237 bears the Phosphoserine mark. WD repeat units follow at residues 294–334, 346–385, and 448–488; these read VHKG…DYMS, TRLCNLYQLAFDKSMTMIGCVGDTDTIHLFKLDDASNSLP, and VNES…GECV. Residues 342-346 carry the L/FRRG motif motif; the sequence is FRRGT.

The protein belongs to the WD repeat PROPPIN family.

The protein localises to the cytoplasm. It localises to the vacuole. Required for cytoplasm to vacuole transport (Cvt) vesicles formation and mitophagy. Involved in binding of phosphatidylethanolamine to ATG8 and in recruitment of ATG8 and ATG5 to the pre-autophagosomal structure. Protects ATG8 from ARG4-mediated cleavage. Essential for maturation of proaminopeptidase I. The sequence is that of Autophagy-related protein 21 (ATG21) from Saccharomyces cerevisiae (strain ATCC 204508 / S288c) (Baker's yeast).